A 217-amino-acid polypeptide reads, in one-letter code: Large ribosomal subunit protein uL1 (217 aa).

Belongs to the universal ribosomal protein uL1 family.

This Spodoptera frugiperda (Fall armyworm) protein is Large ribosomal subunit protein uL1 (RpL10A).